A 300-amino-acid polypeptide reads, in one-letter code: MNNVLIITGPTASGKSKISVKIAQDNNGIIVNCDSKQIYKEIPIITDQPKLNDYSVKHRLYGYISVTQQYSVGLWIEDLKKEILSATAEKKLPIITGGSGMYINSIIYGLSQIPKIEDDVRYKTKKLFEDLGNKEFYALLINKDPLAKCLHQNNSHRLLRAYEVIEQTGISIFSWKKNTIRQPILNNFKLCVLLPPRDQVYKTINERFINMINTDVIEEIENLLSLNVPKHFPAMKAHGVPELISYLKNKISIDEAIETAQKNTRHYAKRQYTWFKNQFPNASFYDSKCQLLESIKNYQN.

Position 9 to 16 (9 to 16 (GPTASGKS)) interacts with ATP. 11–16 (TASGKS) provides a ligand contact to substrate. The interval 34–37 (DSKQ) is interaction with substrate tRNA.

The protein belongs to the IPP transferase family. As to quaternary structure, monomer. Mg(2+) serves as cofactor.

It catalyses the reaction adenosine(37) in tRNA + dimethylallyl diphosphate = N(6)-dimethylallyladenosine(37) in tRNA + diphosphate. Its function is as follows. Catalyzes the transfer of a dimethylallyl group onto the adenine at position 37 in tRNAs that read codons beginning with uridine, leading to the formation of N6-(dimethylallyl)adenosine (i(6)A). The polypeptide is tRNA dimethylallyltransferase (Ehrlichia canis (strain Jake)).